The chain runs to 544 residues: Sphingosine-1-phosphate lyase (544 aa).

Residues 1 to 29 (MDSFSYSSMKSMLIQARGSLNSRLSEFEP) are Lumenal-facing. A helical; Signal-anchor for type III membrane protein transmembrane segment spans residues 30–50 (LVLLLVPLVSLFLAQIIGSVF). Topologically, residues 51 to 544 (GVVHEKGLKA…LLVSFMDSQY (494 aa)) are cytoplasmic. Lysine 349 is modified (N6-(pyridoxal phosphate)lysine).

It belongs to the group II decarboxylase family. Sphingosine-1-phosphate lyase subfamily. Pyridoxal 5'-phosphate is required as a cofactor. In terms of tissue distribution, expressed in the peripheral parts of leaves and the bases of trichomes.

The protein resides in the endoplasmic reticulum membrane. The enzyme catalyses sphinganine 1-phosphate = hexadecanal + phosphoethanolamine. The protein operates within lipid metabolism; sphingolipid metabolism. In terms of biological role, cleaves phosphorylated sphingoid bases (PSBs), such as sphingosine-1-phosphate, into fatty aldehydes and phosphoethanolamine. May play a minor role in maintenance of sphingolipid metabolism during normal plant development and growth, but be required for maintaining sphingoid long chain bases (LCB) and their phosphorylated derivatives (LCB-P) levels when sphingolipid metabolism is perturbed. May play a role in dehydration stress. The protein is Sphingosine-1-phosphate lyase (DPL1) of Arabidopsis thaliana (Mouse-ear cress).